Consider the following 287-residue polypeptide: 4-diphosphocytidyl-2-C-methyl-D-erythritol kinase (287 aa).

The active site involves Lys-12. ATP is bound at residue 97-107 (PMGGGLGGGSS). The active site involves Asp-139.

It belongs to the GHMP kinase family. IspE subfamily.

The enzyme catalyses 4-CDP-2-C-methyl-D-erythritol + ATP = 4-CDP-2-C-methyl-D-erythritol 2-phosphate + ADP + H(+). It functions in the pathway isoprenoid biosynthesis; isopentenyl diphosphate biosynthesis via DXP pathway; isopentenyl diphosphate from 1-deoxy-D-xylulose 5-phosphate: step 3/6. Catalyzes the phosphorylation of the position 2 hydroxy group of 4-diphosphocytidyl-2C-methyl-D-erythritol. This chain is 4-diphosphocytidyl-2-C-methyl-D-erythritol kinase, found in Marinobacter nauticus (strain ATCC 700491 / DSM 11845 / VT8) (Marinobacter aquaeolei).